A 360-amino-acid polypeptide reads, in one-letter code: Histidinol-phosphate aminotransferase (360 aa).

K221 bears the N6-(pyridoxal phosphate)lysine mark.

Belongs to the class-II pyridoxal-phosphate-dependent aminotransferase family. Histidinol-phosphate aminotransferase subfamily. As to quaternary structure, homodimer. Pyridoxal 5'-phosphate is required as a cofactor.

The enzyme catalyses L-histidinol phosphate + 2-oxoglutarate = 3-(imidazol-4-yl)-2-oxopropyl phosphate + L-glutamate. It functions in the pathway amino-acid biosynthesis; L-histidine biosynthesis; L-histidine from 5-phospho-alpha-D-ribose 1-diphosphate: step 7/9. The sequence is that of Histidinol-phosphate aminotransferase from Desulfitobacterium hafniense (strain Y51).